The sequence spans 347 residues: Lipopolysaccharide core heptosyltransferase OpsX (347 aa).

This sequence belongs to the glycosyltransferase 9 family.

The protein operates within bacterial outer membrane biogenesis; LPS core biosynthesis. Catalyzes heptose transfer to the lipopolysaccharide core. It transfers the first L-glycero-D-manno-heptose to the phosphorylated 3-deoxy-alpha-D-manno-octulosonic acid (Kdo-P) of the inner core. This is Lipopolysaccharide core heptosyltransferase OpsX from Haemophilus influenzae (strain ATCC 51907 / DSM 11121 / KW20 / Rd).